The following is a 59-amino-acid chain: Large ribosomal subunit protein bL32 (59 aa).

Positions 1–15 (MAVPKRKTSKSKRDM) are enriched in basic residues. Residues 1 to 21 (MAVPKRKTSKSKRDMRRASNS) are disordered.

It belongs to the bacterial ribosomal protein bL32 family.

In Alkaliphilus metalliredigens (strain QYMF), this protein is Large ribosomal subunit protein bL32.